The chain runs to 357 residues: DNA replication and repair protein RecF (357 aa).

Position 30–37 (30–37 (GANGSGKT)) interacts with ATP.

Belongs to the RecF family.

It is found in the cytoplasm. Functionally, the RecF protein is involved in DNA metabolism; it is required for DNA replication and normal SOS inducibility. RecF binds preferentially to single-stranded, linear DNA. It also seems to bind ATP. This chain is DNA replication and repair protein RecF, found in Salmonella schwarzengrund (strain CVM19633).